A 400-amino-acid chain; its full sequence is Iron(III) enterobactin esterase (400 aa).

This sequence belongs to the Fes family.

The protein localises to the cytoplasm. The catalysed reaction is Fe(III)-enterobactin + 3 H2O + H(+) = Fe(III)-[N-(2,3-dihydroxybenzoyl)-L-serine] + 2 N-(2,3-dihydroxybenzoyl)-L-serine. The enzyme catalyses Fe(III)-enterobactin + H2O = Fe(III)-[N-(2,3-dihydroxybenzoyl)-L-serine]3 + H(+). It catalyses the reaction Fe(III)-[N-(2,3-dihydroxybenzoyl)-L-serine]3 + H2O + H(+) = Fe(III)-[N-(2,3-dihydroxybenzoyl)-L-serine]2 + N-(2,3-dihydroxybenzoyl)-L-serine. It carries out the reaction Fe(III)-[N-(2,3-dihydroxybenzoyl)-L-serine]2 + H2O + H(+) = Fe(III)-[N-(2,3-dihydroxybenzoyl)-L-serine] + N-(2,3-dihydroxybenzoyl)-L-serine. The catalysed reaction is enterobactin + 3 H2O = 3 N-(2,3-dihydroxybenzoyl)-L-serine + 2 H(+). In terms of biological role, catalyzes the hydrolysis of ferric enterobactin (Fe-Ent). Is responsible for the release of iron from ferric enterobactin. Also catalyzes the hydrolysis of iron-free enterobactin (Ent). Hydrolyzes ferric monoglucosyl-C-Ent (Fe-MGE) poorly and does not hydrolyze ferric diglucosyl-C-Ent (Fe-DGE) or ferric triglucosyl-C-Ent (Fe-TGE) at all. Also hydrolyzes apo MGE, but catalyzes the hydrolysis of apo DGE very poorly, and does not process apo TGE at all. The catalytic efficiency for processing Fe-Ent is much higher than that for apo Ent, suggesting that Fe-Ent is the physiological substrate. In Escherichia coli O6:H1 (strain CFT073 / ATCC 700928 / UPEC), this protein is Iron(III) enterobactin esterase.